The sequence spans 256 residues: Floral homeotic protein APETALA 1-2 (256 aa).

Residues Met-1–Ser-61 form the MADS-box domain. A K-box domain is found at Asn-88–Val-178. The segment at Asp-187–Ile-206 is disordered.

Homodimer capable of binding to CArG-box sequences.

It localises to the nucleus. Transcription factor that promotes early floral meristem identity in synergy with LEAFY. Displays a redundant function with CAULIFLOWER in the up-regulation of LEAFY. Required subsequently for the transition of an inflorescence meristem into a floral meristem, and for the normal development of sepals and petals in flowers. Regulates positively B class homeotic proteins. The polypeptide is Floral homeotic protein APETALA 1-2 (2AP1) (Brassica oleracea var. italica (Broccoli)).